The chain runs to 384 residues: Probable L-aspartate decarboxylase (384 aa).

Lysine 233 is subject to N6-(pyridoxal phosphate)lysine.

The protein belongs to the group II decarboxylase family. MfnA subfamily. Pyridoxal 5'-phosphate is required as a cofactor.

It catalyses the reaction L-aspartate + H(+) = beta-alanine + CO2. Its pathway is cofactor biosynthesis; coenzyme A biosynthesis. Functionally, catalyzes the decarboxylation of L-aspartate to produce beta-alanine. The protein is Probable L-aspartate decarboxylase of Pyrococcus abyssi (strain GE5 / Orsay).